Here is a 348-residue protein sequence, read N- to C-terminus: Sulfate/thiosulfate import ATP-binding protein CysA (348 aa).

One can recognise an ABC transporter domain in the interval Ile-3–Leu-233. Residue Gly-35 to Ser-42 coordinates ATP.

This sequence belongs to the ABC transporter superfamily. Sulfate/tungstate importer (TC 3.A.1.6) family.

Its subcellular location is the plastid. The protein localises to the chloroplast. The catalysed reaction is sulfate(out) + ATP + H2O = sulfate(in) + ADP + phosphate + H(+). The enzyme catalyses thiosulfate(out) + ATP + H2O = thiosulfate(in) + ADP + phosphate + H(+). In terms of biological role, part of the ABC transporter complex involved in sulfate/thiosulfate import. Responsible for energy coupling to the transport system. The chain is Sulfate/thiosulfate import ATP-binding protein CysA from Mesostigma viride (Green alga).